Consider the following 124-residue polypeptide: Secreted RxLR effector protein 49 (124 aa).

Residues 1 to 22 (MIRRSPLVAVILFVAITHVVLA) form the signal peptide. A RxLR motif is present at residues 57 to 60 (RSLR).

Belongs to the RxLR effector family.

It is found in the secreted. The protein localises to the host cytoplasm. The protein resides in the host nucleus. Its function is as follows. Effector that acts as a broad suppressor of cell death to interrupt plant immunity. Inhibits cell death induced by cell death-inducing proteins, including the PAMP elicitor INF1 from P.infestans. The chain is Secreted RxLR effector protein 49 from Plasmopara viticola (Downy mildew of grapevine).